The primary structure comprises 429 residues: Histidine--tRNA ligase (429 aa).

It belongs to the class-II aminoacyl-tRNA synthetase family. Homodimer.

Its subcellular location is the cytoplasm. The catalysed reaction is tRNA(His) + L-histidine + ATP = L-histidyl-tRNA(His) + AMP + diphosphate + H(+). The chain is Histidine--tRNA ligase from Pseudomonas fluorescens (strain Pf0-1).